The following is a 91-amino-acid chain: MQNSNWYKFFKNIKPEIISFSFLVSLLWFIRSPLKNTTELLEFEVEPKTIPFNQEFLNQVYEKAKHKYIWNYSPTQIIHKLEKLINTRIRI.

It is found in the plastid. The protein localises to the cyanelle. This is an uncharacterized protein from Cyanophora paradoxa.